Consider the following 451-residue polypeptide: tRNA-2-methylthio-N(6)-dimethylallyladenosine synthase (451 aa).

An MTTase N-terminal domain is found at 10 to 128 (KKFYTLTFGC…FPQLLEHVMQ (119 aa)). The [4Fe-4S] cluster site is built by C19, C55, C89, C165, C169, and C172. The 231-residue stretch at 151–381 (REDSIKAWVV…ISVQQEISEQ (231 aa)) folds into the Radical SAM core domain. Residues 384 to 447 (KDLENTVQRI…SWNLYGEIFE (64 aa)) enclose the TRAM domain.

Belongs to the methylthiotransferase family. MiaB subfamily. As to quaternary structure, monomer. Requires [4Fe-4S] cluster as cofactor.

It localises to the cytoplasm. It carries out the reaction N(6)-dimethylallyladenosine(37) in tRNA + (sulfur carrier)-SH + AH2 + 2 S-adenosyl-L-methionine = 2-methylsulfanyl-N(6)-dimethylallyladenosine(37) in tRNA + (sulfur carrier)-H + 5'-deoxyadenosine + L-methionine + A + S-adenosyl-L-homocysteine + 2 H(+). Catalyzes the methylthiolation of N6-(dimethylallyl)adenosine (i(6)A), leading to the formation of 2-methylthio-N6-(dimethylallyl)adenosine (ms(2)i(6)A) at position 37 in tRNAs that read codons beginning with uridine. This is tRNA-2-methylthio-N(6)-dimethylallyladenosine synthase from Natranaerobius thermophilus (strain ATCC BAA-1301 / DSM 18059 / JW/NM-WN-LF).